A 332-amino-acid chain; its full sequence is dTDP-3,4-didehydro-2,6-dideoxy-alpha-D-glucose 3-reductase (332 aa).

Residue 17–23 (CADIAWR) coordinates NADP(+). Arg24 contributes to the substrate binding site. NADP(+)-binding positions include 42 to 43 (SR), Tyr63, Leu79, and His84. The Proton donor role is filled by Lys102. NADP(+) is bound by residues Arg170 and Asp182. Positions 240 and 260 each coordinate substrate.

It belongs to the Gfo/Idh/MocA family. Homotetramer; dimer of dimers.

It carries out the reaction dTDP-4-dehydro-2,6-dideoxy-alpha-D-glucose + NADP(+) = dTDP-3,4-didehydro-2,6-dideoxy-alpha-D-glucose + NADPH + H(+). It functions in the pathway antibiotic biosynthesis. Involved in the biosynthesis of L-digitoxose, an unusual dideoxysugar attached to various pharmacologically active natural products, including the antitumor antibiotic tetrocarcin A, and the antibiotics kijanimicin and jadomycin B. Catalyzes the reduction of the C-3 keto moiety of dTDP-3,4-diketo-2,6-dideoxy-alpha-D-glucose to yield dTDP-4-keto-2,6-dideoxy-alpha-D-glucose. Also able to reduce dTDP-3-keto-6-deoxy-D-galactose and dTDP-3-keto-6-deoxy-D-glucose to yield dTDP-fucose and dTDP-quinovose, respectively. The polypeptide is dTDP-3,4-didehydro-2,6-dideoxy-alpha-D-glucose 3-reductase (Actinomadura kijaniata).